The primary structure comprises 710 residues: DNA ligase (710 aa).

A disordered region spans residues 1-26 (MPEDAIGQQVPPEQEAAGAEPTSAAR). NAD(+) contacts are provided by residues 53-57 (DAEFD), 102-103 (SL), and glutamate 132. Catalysis depends on lysine 134, which acts as the N6-AMP-lysine intermediate. NAD(+) is bound by residues arginine 155, glutamate 196, lysine 312, and lysine 336. Zn(2+) is bound by residues cysteine 430, cysteine 433, cysteine 449, and cysteine 455. A BRCT domain is found at 619–708 (EGPRPLEGMT…PDAAREVARV (90 aa)).

The protein belongs to the NAD-dependent DNA ligase family. LigA subfamily. Mg(2+) is required as a cofactor. Requires Mn(2+) as cofactor.

The enzyme catalyses NAD(+) + (deoxyribonucleotide)n-3'-hydroxyl + 5'-phospho-(deoxyribonucleotide)m = (deoxyribonucleotide)n+m + AMP + beta-nicotinamide D-nucleotide.. Its function is as follows. DNA ligase that catalyzes the formation of phosphodiester linkages between 5'-phosphoryl and 3'-hydroxyl groups in double-stranded DNA using NAD as a coenzyme and as the energy source for the reaction. It is essential for DNA replication and repair of damaged DNA. This is DNA ligase from Salinispora arenicola (strain CNS-205).